A 185-amino-acid chain; its full sequence is Elongation factor P (185 aa).

The protein belongs to the elongation factor P family.

The protein localises to the cytoplasm. It participates in protein biosynthesis; polypeptide chain elongation. Its function is as follows. Involved in peptide bond synthesis. Stimulates efficient translation and peptide-bond synthesis on native or reconstituted 70S ribosomes in vitro. Probably functions indirectly by altering the affinity of the ribosome for aminoacyl-tRNA, thus increasing their reactivity as acceptors for peptidyl transferase. The polypeptide is Elongation factor P (Synechococcus sp. (strain JA-2-3B'a(2-13)) (Cyanobacteria bacterium Yellowstone B-Prime)).